Reading from the N-terminus, the 117-residue chain is Putative small ubiquitin-related modifier 6 (117 aa).

The interval 1–30 is disordered; that stretch reads MSTKSSSIHGRNEVKMEGEKRKDVESESTH. The segment covering 10–28 has biased composition (basic and acidic residues); sequence GRNEVKMEGEKRKDVESES. Residues 31-108 form the Ubiquitin-like domain; that stretch reads VTLNVKGQDE…IDALLPQESG (78 aa). Residue Gly-108 forms a Glycyl lysine isopeptide (Gly-Lys) (interchain with K-? in acceptor proteins) linkage.

Belongs to the ubiquitin family. SUMO subfamily. Interacts with SAE2, SCE1, SIZ1 and MMS21 Covalently attached to a number of proteins.

Its subcellular location is the nucleus. It localises to the cytoplasm. Its function is as follows. Ubiquitin-like protein which can be covalently attached to target lysines as a monomer. Does not seem to be involved in protein degradation and may function as an antagonist of ubiquitin in the degradation process. In Arabidopsis thaliana (Mouse-ear cress), this protein is Putative small ubiquitin-related modifier 6 (SUMO6).